We begin with the raw amino-acid sequence, 652 residues long: Acetyl-coenzyme A synthetase (652 aa).

CoA-binding positions include 189 to 192 and Thr-311; that span reads RGGK. Residues 387-389, 411-416, Asp-500, and Arg-515 contribute to the ATP site; these read GEP and DTWWQT. Ser-523 is a binding site for CoA. ATP is bound at residue Arg-526. Residues Val-537, His-539, and Val-542 each contribute to the Mg(2+) site. Arg-584 is a binding site for CoA. N6-acetyllysine is present on Lys-609.

Belongs to the ATP-dependent AMP-binding enzyme family. The cofactor is Mg(2+). Post-translationally, acetylated. Deacetylation by the SIR2-homolog deacetylase activates the enzyme.

The enzyme catalyses acetate + ATP + CoA = acetyl-CoA + AMP + diphosphate. In terms of biological role, catalyzes the conversion of acetate into acetyl-CoA (AcCoA), an essential intermediate at the junction of anabolic and catabolic pathways. AcsA undergoes a two-step reaction. In the first half reaction, AcsA combines acetate with ATP to form acetyl-adenylate (AcAMP) intermediate. In the second half reaction, it can then transfer the acetyl group from AcAMP to the sulfhydryl group of CoA, forming the product AcCoA. This chain is Acetyl-coenzyme A synthetase, found in Rhizobium rhizogenes (Agrobacterium rhizogenes).